Here is a 243-residue protein sequence, read N- to C-terminus: uncharacterized protein (243 aa).

Composition is skewed to basic and acidic residues over residues 1–11 (MSDEGYRELVE) and 167–178 (RNRDPPRPSYLR). Disordered regions lie at residues 1 to 26 (MSDE…SPDR) and 146 to 243 (ELYQ…CWPF). Over residues 185-200 (STTTARRPRAMTSTPE) the composition is skewed to low complexity.

This is an uncharacterized protein from Canis lupus familiaris (Dog).